We begin with the raw amino-acid sequence, 131 residues long: MKFTTVATVFAISSLAAAKGGEKDHGKASTVTKYVTETTHRYGRFDKTSRSKKPKETGTHRYGKFNKTPRPVTTTVLVKESDLPKKRDAVVARDSKNASSNSTTSSGNNGVATGVSLGLAGVLAVGAALVI.

The signal sequence occupies residues 1-18; the sequence is MKFTTVATVFAISSLAAA. 2 stretches are compositionally biased toward basic and acidic residues: residues 42–59 and 79–96; these read YGRF…ETGT and KESD…RDSK. Positions 42 to 110 are disordered; it reads YGRFDKTSRS…NSTTSSGNNG (69 aa). Residues N97 and N101 are each glycosylated (N-linked (GlcNAc...) asparagine). The span at 97–110 shows a compositional bias: low complexity; sequence NASSNSTTSSGNNG. S105 carries GPI-anchor amidated serine lipidation. A propeptide spans 106–131 (removed in mature form); that stretch reads SGNNGVATGVSLGLAGVLAVGAALVI.

The protein belongs to the PGA14 family. In terms of processing, the GPI-anchor is attached to the protein in the endoplasmic reticulum and serves to target the protein to the cell surface. There, the glucosamine-inositol phospholipid moiety is cleaved off and the GPI-modified mannoprotein is covalently attached via its lipidless GPI glycan remnant to the 1,6-beta-glucan of the outer cell wall layer.

The protein localises to the secreted. It localises to the cell wall. The protein resides in the membrane. Functionally, hydrophilin which is essential to overcome the simple stress of the desiccation-rehydration process. The polypeptide is Hydrophilin PGA14 (PGA14) (Candida albicans (strain SC5314 / ATCC MYA-2876) (Yeast)).